The sequence spans 375 residues: MQKLAVYVYIYLFMLISVDPVALDDGSQPTENAEKDGLCNACTWRQNTKSSRIEAIKIQILSKLRLEQAPNISRDVIKQLLPKAPPLQELIDQYDVQRDDSSDGSLEDDDYHATTETIITMPTESDFLVQMEGKPKCCFFKFSSKIQYNKVVKAQLWIYLRQVQKPTTVFVQILRLIKPMKDGTRYTGIRSLKLDIDPGAGFGQSIDVKTVLQNWLKQPESNLGIEIKAFDENGRDLAVTFPGPGEDGLNPFLEVRVTDTPKRSRRDFGLDCDEHSTESRCCRYPLTVDFEAFGWDWIIAPKRYKANYCFGECEFVFLQKYPHTHLVHQANPRGSAGPCCTPTKMSPINMLYFNGKEQIIYGKIPAMVVDRCGCS.

A signal peptide spans 1–23 (MQKLAVYVYIYLFMLISVDPVAL). Positions 24–266 (DDGSQPTENA…VTDTPKRSRR (243 aa)) are excised as a propeptide. An N-linked (GlcNAc...) asparagine glycan is attached at Asn71. 4 cysteine pairs are disulfide-bonded: Cys272-Cys282, Cys281-Cys340, Cys309-Cys372, and Cys313-Cys374.

This sequence belongs to the TGF-beta family. Homodimer; disulfide-linked.

Its subcellular location is the secreted. In terms of biological role, acts specifically as a negative regulator of skeletal muscle growth. The polypeptide is Growth/differentiation factor 8 (MSTN) (Anser anser anser (Western greylag goose)).